We begin with the raw amino-acid sequence, 494 residues long: Rho GTPase-activating protein 19 (494 aa).

The residue at position 2 (Ala-2) is an N-acetylalanine. Phosphoserine occurs at positions 7 and 31. The Rho-GAP domain occupies 102-308; the sequence is MSLKRKEKGV…FMIKHSQKLF (207 aa). A disordered region spans residues 399 to 451; that stretch reads QSLTQTPGREPSTPRVQKRARSRSFSGLIKRKVLGSQMTSEKKNSSPAPESVA. 3 positions are modified to phosphoserine: Ser-422, Ser-438, and Ser-470. Thr-478 bears the Phosphothreonine mark.

GTPase activator for the Rho-type GTPases by converting them to an inactive GDP-bound state. The chain is Rho GTPase-activating protein 19 (Arhgap19) from Mus musculus (Mouse).